The primary structure comprises 214 residues: External core antigen (214 aa).

An N-terminal signal peptide occupies residues 1 to 19; that stretch reads MQLFHLCLIISCTCPTIQA. The HBEAG stretch occupies residues 25–27; the sequence is GWL. The disordered stretch occupies residues 165–214; it reads NAPILSTLPETTVVRRRDRGRSPRRRTPSPRRRRSQSPRRRRSQSRESQC. Residues 178–207 are compositionally biased toward basic residues; sequence VRRRDRGRSPRRRTPSPRRRRSQSPRRRRS. The stretch at 186-192 is one 1; half-length repeat; it reads SPRRRTP. The interval 186–208 is 3 X 8 AA repeats of S-P-R-R-R-R-S-Q; sequence SPRRRTPSPRRRRSQSPRRRRSQ. Positions 186-214 are excised as a propeptide; that stretch reads SPRRRTPSPRRRRSQSPRRRRSQSRESQC. Repeat copies occupy residues 193–200 and 201–208.

The protein belongs to the orthohepadnavirus precore antigen family. Homodimerizes. Phosphorylated. Post-translationally, cleaved by host furin.

The protein resides in the secreted. It localises to the host nucleus. Functionally, may regulate immune response to the intracellular capsid in acting as a T-cell tolerogen, by having an immunoregulatory effect which prevents destruction of infected cells by cytotoxic T-cells. This immune regulation may predispose to chronicity during perinatal infections and prevent severe liver injury during adult infections. The polypeptide is External core antigen (Homo sapiens (Human)).